The chain runs to 252 residues: Geranylgeranylglyceryl phosphate synthase (252 aa).

Positions 22 and 51 each coordinate Mg(2+). Residues Y170–G176, G201–G202, and G223–S224 contribute to the sn-glycerol 1-phosphate site.

The protein belongs to the GGGP/HepGP synthase family. Group II subfamily. The cofactor is Mg(2+).

It localises to the cytoplasm. It catalyses the reaction sn-glycerol 1-phosphate + (2E,6E,10E)-geranylgeranyl diphosphate = sn-3-O-(geranylgeranyl)glycerol 1-phosphate + diphosphate. It participates in membrane lipid metabolism; glycerophospholipid metabolism. In terms of biological role, prenyltransferase that catalyzes the transfer of the geranylgeranyl moiety of geranylgeranyl diphosphate (GGPP) to the C3 hydroxyl of sn-glycerol-1-phosphate (G1P). This reaction is the first ether-bond-formation step in the biosynthesis of archaeal membrane lipids. The protein is Geranylgeranylglyceryl phosphate synthase of Thermoplasma volcanium (strain ATCC 51530 / DSM 4299 / JCM 9571 / NBRC 15438 / GSS1).